A 463-amino-acid chain; its full sequence is Nuclear hormone receptor family member nhr-79 (463 aa).

The segment at residues 3–81 (RGKCMVCDSP…AGMMRDLVQA (79 aa)) is a DNA-binding region (nuclear receptor). NR C4-type zinc fingers lie at residues 6–27 (CMVC…CKAC) and 43–64 (CLGD…CRHC). The tract at residues 83 to 119 (REIKSDKGKNSRNSSQSEDFFSPPPEQPGPSNYFDQF) is disordered. One can recognise an NR LBD domain in the interval 203 to 463 (YTEQVINLNM…ILKDMLKFQY (261 aa)).

It belongs to the nuclear hormone receptor family.

It is found in the nucleus. Its function is as follows. Orphan nuclear receptor. The polypeptide is Nuclear hormone receptor family member nhr-79 (nhr-79) (Caenorhabditis elegans).